A 336-amino-acid polypeptide reads, in one-letter code: HTH-type transcriptional repressor PurR (336 aa).

The HTH lacI-type domain maps to 2–56 (ATIKDVAKLAGVSTTTVSHVINKTRFVAEDTSKAVWDAIQQLNYSPSAVARSLKV). Positions 4–23 (IKDVAKLAGVSTTTVSHVIN) form a DNA-binding region, H-T-H motif. Residues 48-56 (SAVARSLKV) mediate DNA binding. Tyr-73, Lys-188, Phe-219, and Asp-273 together coordinate hypoxanthine.

As to quaternary structure, homodimer.

It functions in the pathway purine metabolism; purine nucleotide biosynthesis [regulation]. Is the main repressor of the genes involved in the de novo synthesis of purine nucleotides, regulating purB, purC, purEK, purF, purHD, purL, purMN and guaBA expression. PurR is allosterically activated to bind its cognate DNA by binding the purine corepressors, hypoxanthine or guanine, thereby effecting transcription repression. This Actinobacillus pleuropneumoniae serotype 3 (strain JL03) protein is HTH-type transcriptional repressor PurR.